We begin with the raw amino-acid sequence, 654 residues long: Translation factor GUF1, mitochondrial (654 aa).

A tr-type G domain is found at Glu57–Val237. GTP contacts are provided by residues Ala66–Ser73, Asp130–His134, and Asn184–Asp187.

This sequence belongs to the TRAFAC class translation factor GTPase superfamily. Classic translation factor GTPase family. LepA subfamily.

The protein localises to the mitochondrion inner membrane. It carries out the reaction GTP + H2O = GDP + phosphate + H(+). Promotes mitochondrial protein synthesis. May act as a fidelity factor of the translation reaction, by catalyzing a one-codon backward translocation of tRNAs on improperly translocated ribosomes. Binds to mitochondrial ribosomes in a GTP-dependent manner. This chain is Translation factor GUF1, mitochondrial, found in Candida albicans (strain WO-1) (Yeast).